The sequence spans 372 residues: MRAIITGGGTGGHIYPALAIARGLQSRFSKVQILYVGTNRGLEADIVPKANFPFQAITVSGLQRKISLENFKVLWQAYRGYREAVGIIKTFNPDVVIGTGGYVCGPVVMAAARRGIPTLIHEQNAFPGITNRILSKFADQVTVTFEDSIRYFGNKDNITLTGLPVRPEILQAERQTALEMFKLKNDKLTLLVFGGSRGARKINQAMVETIKKYGNDERLQILHATGQAGYEEFMQELKDNGISLEHYGNIIIKPYIYNMHEALVAADMVVSRAGAATLAELTVLGLPSILIPYPYASENHQEHNARALAERGAAVLIKDSQLTGEKLIQAIKDMLQNKEKLKNMAKSSQKLGRPEALSDIIKCVEKILPRQQ.

Residues 10–12 (TGG), N124, R166, S196, I256, and Q301 each bind UDP-N-acetyl-alpha-D-glucosamine.

The protein belongs to the glycosyltransferase 28 family. MurG subfamily.

It is found in the cell membrane. The catalysed reaction is di-trans,octa-cis-undecaprenyl diphospho-N-acetyl-alpha-D-muramoyl-L-alanyl-D-glutamyl-meso-2,6-diaminopimeloyl-D-alanyl-D-alanine + UDP-N-acetyl-alpha-D-glucosamine = di-trans,octa-cis-undecaprenyl diphospho-[N-acetyl-alpha-D-glucosaminyl-(1-&gt;4)]-N-acetyl-alpha-D-muramoyl-L-alanyl-D-glutamyl-meso-2,6-diaminopimeloyl-D-alanyl-D-alanine + UDP + H(+). Its pathway is cell wall biogenesis; peptidoglycan biosynthesis. Its function is as follows. Cell wall formation. Catalyzes the transfer of a GlcNAc subunit on undecaprenyl-pyrophosphoryl-MurNAc-pentapeptide (lipid intermediate I) to form undecaprenyl-pyrophosphoryl-MurNAc-(pentapeptide)GlcNAc (lipid intermediate II). The sequence is that of UDP-N-acetylglucosamine--N-acetylmuramyl-(pentapeptide) pyrophosphoryl-undecaprenol N-acetylglucosamine transferase from Desulforamulus reducens (strain ATCC BAA-1160 / DSM 100696 / MI-1) (Desulfotomaculum reducens).